A 254-amino-acid polypeptide reads, in one-letter code: Myeloblastin (254 aa).

Residues 1–27 (MSGSYPSPKGIHPFLLLALVVGGAVQA) form the signal peptide. Residues 28 to 29 (SK) constitute a propeptide that is removed on maturation. Residues 30-250 (IVGGHEARPH…YVDWIQNVLR (221 aa)) form the Peptidase S1 domain. A disulfide bridge links Cys-58 with Cys-74. Active-site charge relay system residues include His-73 and Asp-120. 2 N-linked (GlcNAc...) asparagine glycosylation sites follow: Asn-127 and Asn-176. Disulfide bonds link Cys-154–Cys-211, Cys-184–Cys-190, and Cys-201–Cys-226. The active-site Charge relay system is the Ser-205. The propeptide occupies 251–254 (GAEP).

Belongs to the peptidase S1 family. Elastase subfamily. As to quaternary structure, may form dimers. Interacts with CD177; the interaction tethers PRTN3 to the cell surface; the interaction is direct. Interacts with SERPINB1. Interacts with ADGRG3.

It localises to the lysosome. It is found in the secreted. Its subcellular location is the cell membrane. The protein resides in the membrane raft. The enzyme catalyses Hydrolysis of proteins, including elastin, by preferential cleavage: -Ala-|-Xaa- &gt; -Val-|-Xaa-.. Its function is as follows. Serine protease that degrades elastin, fibronectin, laminin, vitronectin, and collagen types I, III, and IV (in vitro). By cleaving and activating receptor F2RL1/PAR-2, enhances endothelial cell barrier function and thus vascular integrity during neutrophil transendothelial migration. May play a role in neutrophil transendothelial migration, probably when associated with CD177. Triggers inflammatory processes in neutrophils by interacting with ADGRG3 upstream of F2RL1/PAR2 activation. In Mus musculus (Mouse), this protein is Myeloblastin (Prtn3).